The following is a 320-amino-acid chain: Ferrochelatase (320 aa).

Fe cation-binding residues include H194 and E275.

Belongs to the ferrochelatase family. Monomer.

It localises to the cytoplasm. It carries out the reaction heme b + 2 H(+) = protoporphyrin IX + Fe(2+). The protein operates within porphyrin-containing compound metabolism; protoheme biosynthesis; protoheme from protoporphyrin-IX: step 1/1. Its function is as follows. Catalyzes the ferrous insertion into protoporphyrin IX. The polypeptide is Ferrochelatase (Escherichia coli O45:K1 (strain S88 / ExPEC)).